Here is a 200-residue protein sequence, read N- to C-terminus: dTTP/UTP pyrophosphatase (200 aa).

Residue Asp81 is the Proton acceptor of the active site.

This sequence belongs to the Maf family. YhdE subfamily. A divalent metal cation is required as a cofactor.

The protein localises to the cytoplasm. The enzyme catalyses dTTP + H2O = dTMP + diphosphate + H(+). It catalyses the reaction UTP + H2O = UMP + diphosphate + H(+). Functionally, nucleoside triphosphate pyrophosphatase that hydrolyzes dTTP and UTP. May have a dual role in cell division arrest and in preventing the incorporation of modified nucleotides into cellular nucleic acids. This is dTTP/UTP pyrophosphatase from Cupriavidus metallidurans (strain ATCC 43123 / DSM 2839 / NBRC 102507 / CH34) (Ralstonia metallidurans).